The following is a 454-amino-acid chain: Putative serine carboxypeptidase-like 23 (454 aa).

A signal peptide spans 1–22 (MARIHLIIILLVISSTSSSSSS). Asparagine 52, asparagine 102, and asparagine 136 each carry an N-linked (GlcNAc...) asparagine glycan. 3 disulfide bridges follow: cysteine 85-cysteine 338, cysteine 247-cysteine 258, and cysteine 282-cysteine 306. Serine 178 is a catalytic residue. 2 N-linked (GlcNAc...) asparagine glycosylation sites follow: asparagine 287 and asparagine 327. Catalysis depends on residues aspartate 375 and histidine 427.

The protein belongs to the peptidase S10 family. Expression not detected.

It localises to the secreted. Probable carboxypeptidase. This Arabidopsis thaliana (Mouse-ear cress) protein is Putative serine carboxypeptidase-like 23 (SCPL23).